A 793-amino-acid chain; its full sequence is Meiosis-specific protein ASY3 (793 aa).

4 disordered regions span residues 1–40, 58–97, 110–287, and 305–586; these read MSDY…DKDD, LQAN…RKLG, LSGS…KAGA, and EGLR…KRNS. Residues 7–19 are compositionally biased toward polar residues; it reads FGSNYHPSSQSRK. The span at 60–70 shows a compositional bias: basic and acidic residues; sequence ANKKEKSDLAA. Polar residues predominate over residues 72–86; the sequence is QRNSAQVTGHVTSPW. Residues 110 to 122 are compositionally biased toward low complexity; sequence LSGSKGLNKGLNG. Polar residues predominate over residues 131–142; that stretch reads SFQNCPISSPQH. 2 stretches are compositionally biased toward basic and acidic residues: residues 151–165 and 177–187; these read RNDR…RMEE and SQREKMDKPGK. The segment covering 209–219 has biased composition (polar residues); sequence PANNEDVNSET. The span at 221–248 shows a compositional bias: basic and acidic residues; it reads EVEKTNFKLSQDKGSNDDPLIKPRHNSD. Over residues 322–341 the composition is skewed to basic residues; it reads KKQRGRRKNTVVKCRKAHSR. Basic and acidic residues-rich tracts occupy residues 342–354, 363–385, 392–407, and 424–441; these read KKDE…KEAS, ESTE…DLHP, QKPD…HPSP, and NGDK…KSVE. Composition is skewed to low complexity over residues 455–470 and 491–502; these read APIS…EASP and GTKKTSQGTTGQ. Composition is skewed to basic and acidic residues over residues 505–527 and 541–553; these read DTEK…RESS and SDER…REDS. Residues 682–745 adopt a coiled-coil conformation; it reads SNLAKTKRKH…KGSIKKQRTS (64 aa).

As to quaternary structure, interacts with ASY1.

Its subcellular location is the chromosome. It is found in the nucleus. Required for normal meiosis in male and female gametophytes. Acts with ASY1 at the interface between the developing chromosome axes and the recombination machinery to ensure interhomolog recombination. Required for synaptonemal complex formation during meiosis. In Arabidopsis thaliana (Mouse-ear cress), this protein is Meiosis-specific protein ASY3.